The following is a 440-amino-acid chain: Thymidine phosphorylase (440 aa).

Belongs to the thymidine/pyrimidine-nucleoside phosphorylase family. Homodimer.

The catalysed reaction is thymidine + phosphate = 2-deoxy-alpha-D-ribose 1-phosphate + thymine. The protein operates within pyrimidine metabolism; dTMP biosynthesis via salvage pathway; dTMP from thymine: step 1/2. The enzymes which catalyze the reversible phosphorolysis of pyrimidine nucleosides are involved in the degradation of these compounds and in their utilization as carbon and energy sources, or in the rescue of pyrimidine bases for nucleotide synthesis. In Burkholderia pseudomallei (strain K96243), this protein is Thymidine phosphorylase.